A 59-amino-acid polypeptide reads, in one-letter code: Small ribosomal subunit protein bS21 (59 aa).

Residues 36–59 (EHYEKPSVKRKKKAEAAKRNKSKF) are disordered. Over residues 43 to 59 (VKRKKKAEAAKRNKSKF) the composition is skewed to basic residues.

The protein belongs to the bacterial ribosomal protein bS21 family.

The sequence is that of Small ribosomal subunit protein bS21 from Alkaliphilus oremlandii (strain OhILAs) (Clostridium oremlandii (strain OhILAs)).